Reading from the N-terminus, the 499-residue chain is Endosomal/lysosomal proton channel TMEM175 (499 aa).

Over M1–S30 the chain is Cytoplasmic. A disordered region spans residues M1–S30. A Phosphothreonine modification is found at T6. A helical transmembrane segment spans residues H31–T53. Positions R32–D38 match the RxxxFSD motif 1 motif. The Lumenal segment spans residues H54–R74. Residues T55 to E60 are short helix H1-1. The segment at Q62–Q68 is short helix H2-1. A helical membrane pass occupies residues I75–Q97. At V98–D103 the chain is on the cytoplasmic side. The helical transmembrane segment at D104–S125 threads the bilayer. Over L126–L135 the chain is Lumenal. A helical transmembrane segment spans residues G136–Y157. Residues A158–H181 are Cytoplasmic-facing. The chain crosses the membrane as a helical span at residues I182–F202. Residues F203–S207 lie on the Lumenal side of the membrane. Residues Y208–C227 form a helical membrane-spanning segment. Residues K228–S254 lie on the Cytoplasmic side of the membrane. Residues K255–E279 traverse the membrane as a helical segment. The RxxxFSD motif 2 motif lies at R257 to D263. Over D280–Q306 the chain is Lumenal. The interval P285 to S293 is short helix H1-2. The tract at residues S295 to G301 is short helix H2-2. A helical transmembrane segment spans residues F307 to L329. The Cytoplasmic segment spans residues H330 to T335. The chain crosses the membrane as a helical span at residues Q336–Q357. At Q358–R372 the chain is on the lumenal side. Residues V373–T393 form a helical membrane-spanning segment. Residues A394–H413 are Cytoplasmic-facing. The chain crosses the membrane as a helical span at residues A414–L437. Residues S438–R439 are Lumenal-facing. A helical membrane pass occupies residues F440 to A466. Topologically, residues L467–C499 are cytoplasmic.

The protein belongs to the TMEM175 family. As to quaternary structure, homodimer. Interacts with AKT (AKT1, AKT2 or AKT3); leading to formation of the lysoK(GF) complex, which activates the channel. Interacts with LAMP1; inhibiting the proton channel activity of TMEM175. Interacts with LAMP2; inhibiting the proton channel activity of TMEM175.

It is found in the endosome membrane. Its subcellular location is the lysosome membrane. The enzyme catalyses H(+)(in) = H(+)(out). It catalyses the reaction K(+)(in) = K(+)(out). With respect to regulation, active at low pH (under pH 4.6): proton channel activity is activated by luminal side protons. Polyunsaturated fatty acids, such as arachidonic acid, also activate the channel activity. Proton channel activity is directly inhibited by LAMP1 or LAMP2, facilitating lysosomal acidification. Channel activity is activated following interaction with AKT (AKT1, AKT2 or AKT3): interaction promotes activation from closed to an open state. Activation by AKT is independent of AKT serine/threonine-protein kinase activity. In terms of biological role, proton-activated proton channel that catalyzes proton efflux from endosomes and lysosomes to maintain a steady-state pH. Activated at low pH (under pH 4.6) by luminal side protons: selectively mediates lysosomal proton release from lysosomes, eliciting a proton leak that balances V-ATPase activity to maintain pH homeostasis. Regulation of lumenal pH stability is required for autophagosome-lysosome fusion. Also acts as a potassium channel at higher pH, regulating potassium conductance in endosomes and lysosomes. Constitutes the pore-forming subunit of the lysoK(GF) complex, a complex activated by extracellular growth factors. The lysoK(GF) complex is composed of TMEM175 and AKT (AKT1, AKT2 or AKT3), a major target of growth factor receptors: in the complex, TMEM175 channel is opened by conformational changes by AKT, leading to its activation. The lysoK(GF) complex is required to protect neurons against stress-induced damage. This chain is Endosomal/lysosomal proton channel TMEM175, found in Mus musculus (Mouse).